We begin with the raw amino-acid sequence, 107 residues long: uncharacterized protein (107 aa).

This is an uncharacterized protein from Escherichia coli (strain K12).